We begin with the raw amino-acid sequence, 335 residues long: Fructose-1,6-bisphosphatase class 1 (335 aa).

Residues Glu92, Asp114, Leu116, and Asp117 each coordinate Mg(2+). Residues 117-120, Asn209, and Lys275 contribute to the substrate site; that span reads DGSS. Residue Glu281 coordinates Mg(2+).

This sequence belongs to the FBPase class 1 family. Homotetramer. The cofactor is Mg(2+).

The protein resides in the cytoplasm. The enzyme catalyses beta-D-fructose 1,6-bisphosphate + H2O = beta-D-fructose 6-phosphate + phosphate. The protein operates within carbohydrate biosynthesis; gluconeogenesis. The chain is Fructose-1,6-bisphosphatase class 1 from Polaromonas sp. (strain JS666 / ATCC BAA-500).